The primary structure comprises 66 residues: Beta-mammal toxin Css2 (66 aa).

The LCN-type CS-alpha/beta domain occupies Lys-1–Asn-66. Cystine bridges form between Cys-12-Cys-65, Cys-16-Cys-41, Cys-25-Cys-46, and Cys-29-Cys-48. An Asparagine amide modification is found at Asn-66.

Belongs to the long (4 C-C) scorpion toxin superfamily. Sodium channel inhibitor family. Beta subfamily. Post-translationally, C-terminal amidation increases its affinity for sodium channels. In terms of tissue distribution, expressed by the venom gland.

The protein resides in the secreted. Beta toxin that binds site-4 of sodium channels (Nav) and reduces peak current (observed on Nav1.6/SCN8A (IC(50)=307 nM)), shifts the voltage of activation toward more negative potentials (observed on Nav1.6, Nav1.1 (weak), Nav1.2 (weak), and Nav1.7 (weak)), and induces resurgent currents at negative voltages following brief and strong depolarizations (observed on Nav1.6, Nav1.1 (weak), and Nav1.7 (weak)). A reduction of peak current of Nav1.5/SCN7A has been observed in another study (IC(50)=35-40 nM). This toxin is only active on mammals. It has been shown to bind phospholipids. The protein is Beta-mammal toxin Css2 of Centruroides suffusus (Durango bark scorpion).